A 468-amino-acid polypeptide reads, in one-letter code: 3-isopropylmalate dehydratase large subunit (468 aa).

Cys-347, Cys-407, and Cys-410 together coordinate [4Fe-4S] cluster.

This sequence belongs to the aconitase/IPM isomerase family. LeuC type 1 subfamily. As to quaternary structure, heterodimer of LeuC and LeuD. It depends on [4Fe-4S] cluster as a cofactor.

It carries out the reaction (2R,3S)-3-isopropylmalate = (2S)-2-isopropylmalate. It participates in amino-acid biosynthesis; L-leucine biosynthesis; L-leucine from 3-methyl-2-oxobutanoate: step 2/4. Functionally, catalyzes the isomerization between 2-isopropylmalate and 3-isopropylmalate, via the formation of 2-isopropylmaleate. The chain is 3-isopropylmalate dehydratase large subunit from Synechococcus sp. (strain CC9311).